A 551-amino-acid chain; its full sequence is Adenine deaminase (551 aa).

The protein belongs to the metallo-dependent hydrolases superfamily. Adenine deaminase family. Requires Mn(2+) as cofactor.

The catalysed reaction is adenine + H2O + H(+) = hypoxanthine + NH4(+). This is Adenine deaminase from Leuconostoc citreum (strain KM20).